We begin with the raw amino-acid sequence, 525 residues long: Serine/threonine protein phosphatase 2A 55 kDa regulatory subunit B beta isoform (525 aa).

Residues 1–30 (MDPSSKSPDDDDLRPEAEAARRPQPQPQPR) form a disordered region. WD repeat units lie at residues 48–87 (QEVD…DSAS) and 124–165 (EIEE…VKRI). The interval 169 to 191 (NLNTSQSSGNGTTSSSSSSSSRA) is disordered. Residues 171 to 189 (NTSQSSGNGTTSSSSSSSS) show a composition bias toward low complexity. WD repeat units follow at residues 244-282 (AHDY…QSFN), 293-333 (DLTE…LCDN), 352-390 (EIIA…GPVA), and 495-525 (DLST…MYYA).

The protein belongs to the phosphatase 2A regulatory subunit B family. PP2A consists of a common heteromeric enzyme, composed of a catalytic subunit (subunits C), a constant regulatory subunit (subunit A), and a variety of regulatory subunits such as subunits B (the R2/B/PR55/B55, R3/B''/PR72/PR130/PR59 and R5/B'/B56 families).

Its function is as follows. The B regulatory subunit may modulate substrate selectivity and catalytic activity, and may also direct the localization of the catalytic enzyme to a particular subcellular compartment. This Oryza sativa subsp. japonica (Rice) protein is Serine/threonine protein phosphatase 2A 55 kDa regulatory subunit B beta isoform.